The primary structure comprises 234 residues: DNA repair protein RecO (234 aa).

It belongs to the RecO family.

Its function is as follows. Involved in DNA repair and RecF pathway recombination. In Coxiella burnetii (strain RSA 331 / Henzerling II), this protein is DNA repair protein RecO.